Here is an 876-residue protein sequence, read N- to C-terminus: DDB1- and CUL4-associated factor 6 (876 aa).

WD repeat units follow at residues 49–88, 92–133, 139–179, 189–229, and 251–290; these read VHDGCVNTICWNDTGEYILSGSDDTKLVISNPYSRKVLTT, GHRA…ETNR, CHYG…SCTK, NCRR…TRAT, and NKSCRVTSLCYSEDGQEILVSYSSDYIYLFDPKDDTAREL. 2 stretches are compositionally biased toward basic and acidic residues: residues 288–303 and 312–334; these read RELKTPSAEERREELR and LRGDWSDTGPRARPESERERDGE. Disordered stretches follow at residues 288 to 340, 355 to 391, 408 to 485, 498 to 645, and 658 to 691; these read RELK…PNVS, EASEVAQSNRGRGRPRPRGGTNQPDVSTLPTVPSSPN, LQPS…TEGT, WSST…NPEL, and EDPSARDSALQDTDDSDDDPVLIPGARYRTGPGD. The residue at position 336 (S336) is a Phosphoserine. 2 stretches are compositionally biased toward polar residues: residues 375-391 and 409-422; these read TNQPDVSTLPTVPSSPN and QPSTSSTDPVQAQA. Over residues 456–466 the composition is skewed to basic and acidic residues; the sequence is HQSDNSNERLS. Over residues 499 to 510 the composition is skewed to low complexity; that stretch reads SSTASSSRGNGS. Over residues 534 to 544 the composition is skewed to basic and acidic residues; sequence SETRAPEELSE. 4 stretches are compositionally biased toward polar residues: residues 550–562, 571–584, 603–613, and 621–645; these read ENLTQNQIDTAQL, DSNSGEKNNPSQDS, EQASTESATRH, and PSQTEAIEQASTESATRHTSANPEL. S665 is modified (phosphoserine). T670 bears the Phosphothreonine mark. Residue S673 is modified to Phosphoserine. The IQ domain maps to 692–721; sequence RRSAVARIQEFFRRRKERKEMEELDTLNIR. 2 WD repeats span residues 734-772 and 775-814; these read NSRTMIKEANFWGANFVMSGSDCGHIFIWDRHTAEHLML and ADNHVVNCLQPHPFDPILASSGIDYDIKIWSPLEESRIFN. A phosphoserine mark is found at S863 and S866.

In terms of assembly, interacts with the nuclear receptors NR3C1 and AR in the presence of ligand. Interacts with DDB1, CUL4A and CUL4B.

It localises to the nucleus. The protein operates within protein modification; protein ubiquitination. In terms of biological role, ligand-dependent coactivator of nuclear receptors. Enhance transcriptional activity of the nuclear receptors NR3C1 and AR. May function as a substrate receptor for CUL4-DDB1 E3 ubiquitin-protein ligase complex. The polypeptide is DDB1- and CUL4-associated factor 6 (Dcaf6) (Mus musculus (Mouse)).